Here is a 329-residue protein sequence, read N- to C-terminus: Phospho-N-acetylmuramoyl-pentapeptide-transferase (329 aa).

9 helical membrane passes run 1–21, 53–73, 76–96, 109–129, 141–161, 175–195, 198–218, 237–257, and 309–329; these read MLLNGIVAAVITMIITIIGIP, MGGFVFVVVSLVVSLVAALVF, FSPAFITAWWVFAMYAVIGFL, GLTAKQKMLAQILIGIVSYFI, ILSWQVNIGIFFSIFIIIWLV, GLASITVAISLTAYAVIAVVH, YDVLLIILSVIGGLLGFFVFN, FLAIVSILLHAEWTLLLIGAV, and IVFWLFTAVLSVIALCIYFAF.

This sequence belongs to the glycosyltransferase 4 family. MraY subfamily. Mg(2+) is required as a cofactor.

The protein resides in the cell membrane. The enzyme catalyses UDP-N-acetyl-alpha-D-muramoyl-L-alanyl-gamma-D-glutamyl-L-lysyl-D-alanyl-D-alanine + di-trans,octa-cis-undecaprenyl phosphate = Mur2Ac(oyl-L-Ala-gamma-D-Glu-L-Lys-D-Ala-D-Ala)-di-trans,octa-cis-undecaprenyl diphosphate + UMP. Its pathway is cell wall biogenesis; peptidoglycan biosynthesis. Functionally, catalyzes the initial step of the lipid cycle reactions in the biosynthesis of the cell wall peptidoglycan: transfers peptidoglycan precursor phospho-MurNAc-pentapeptide from UDP-MurNAc-pentapeptide onto the lipid carrier undecaprenyl phosphate, yielding undecaprenyl-pyrophosphoryl-MurNAc-pentapeptide, known as lipid I. In Lactococcus lactis subsp. cremoris (strain MG1363), this protein is Phospho-N-acetylmuramoyl-pentapeptide-transferase.